A 336-amino-acid chain; its full sequence is Holliday junction branch migration complex subunit RuvB (336 aa).

A large ATPase domain (RuvB-L) region spans residues A4 to Y184. ATP is bound by residues I23, R24, G65, K68, T69, T70, E131–Y133, R174, Y184, and R221. T69 contributes to the Mg(2+) binding site. The segment at S185–D255 is small ATPAse domain (RuvB-S). The segment at Q258–K336 is head domain (RuvB-H). DNA-binding residues include R294, R313, and R318.

Belongs to the RuvB family. As to quaternary structure, homohexamer. Forms an RuvA(8)-RuvB(12)-Holliday junction (HJ) complex. HJ DNA is sandwiched between 2 RuvA tetramers; dsDNA enters through RuvA and exits via RuvB. An RuvB hexamer assembles on each DNA strand where it exits the tetramer. Each RuvB hexamer is contacted by two RuvA subunits (via domain III) on 2 adjacent RuvB subunits; this complex drives branch migration. In the full resolvosome a probable DNA-RuvA(4)-RuvB(12)-RuvC(2) complex forms which resolves the HJ.

The protein localises to the cytoplasm. The enzyme catalyses ATP + H2O = ADP + phosphate + H(+). Its function is as follows. The RuvA-RuvB-RuvC complex processes Holliday junction (HJ) DNA during genetic recombination and DNA repair, while the RuvA-RuvB complex plays an important role in the rescue of blocked DNA replication forks via replication fork reversal (RFR). RuvA specifically binds to HJ cruciform DNA, conferring on it an open structure. The RuvB hexamer acts as an ATP-dependent pump, pulling dsDNA into and through the RuvAB complex. RuvB forms 2 homohexamers on either side of HJ DNA bound by 1 or 2 RuvA tetramers; 4 subunits per hexamer contact DNA at a time. Coordinated motions by a converter formed by DNA-disengaged RuvB subunits stimulates ATP hydrolysis and nucleotide exchange. Immobilization of the converter enables RuvB to convert the ATP-contained energy into a lever motion, pulling 2 nucleotides of DNA out of the RuvA tetramer per ATP hydrolyzed, thus driving DNA branch migration. The RuvB motors rotate together with the DNA substrate, which together with the progressing nucleotide cycle form the mechanistic basis for DNA recombination by continuous HJ branch migration. Branch migration allows RuvC to scan DNA until it finds its consensus sequence, where it cleaves and resolves cruciform DNA. This is Holliday junction branch migration complex subunit RuvB from Actinobacillus succinogenes (strain ATCC 55618 / DSM 22257 / CCUG 43843 / 130Z).